A 381-amino-acid polypeptide reads, in one-letter code: S-(hydroxymethyl)glutathione dehydrogenase (381 aa).

Cys-49 is a Zn(2+) binding site. His-50 is a binding site for NAD(+). Residues His-71, Glu-72, Cys-101, Cys-104, Cys-107, Cys-115, and Cys-178 each coordinate Zn(2+). NAD(+) contacts are provided by residues 203 to 208, Asp-227, and 298 to 300; these read GGGIVG and IGV.

This sequence belongs to the zinc-containing alcohol dehydrogenase family. Class-III subfamily. Zn(2+) serves as cofactor.

It catalyses the reaction a primary alcohol + NAD(+) = an aldehyde + NADH + H(+). The enzyme catalyses a secondary alcohol + NAD(+) = a ketone + NADH + H(+). The catalysed reaction is S-(hydroxymethyl)glutathione + NADP(+) = S-formylglutathione + NADPH + H(+). It carries out the reaction S-(hydroxymethyl)glutathione + NAD(+) = S-formylglutathione + NADH + H(+). It catalyses the reaction S-nitrosoglutathione + NADH + H(+) = S-(hydroxysulfenamide)glutathione + NAD(+). Oxidizes long-chain alcohols and, in the presence of glutathione, is able to oxidize formaldehyde. Also acts as a S-nitroso-glutathione reductase by catalyzing the NADH-dependent reduction of S-nitrosoglutathione, thereby regulating protein S-nitrosylation. This Candida maltosa (Yeast) protein is S-(hydroxymethyl)glutathione dehydrogenase (FDH1).